Reading from the N-terminus, the 343-residue chain is Anthranilate phosphoribosyltransferase (343 aa).

5-phospho-alpha-D-ribose 1-diphosphate contacts are provided by residues G84, 87 to 88 (GD), T92, 94 to 97 (NIST), 112 to 120 (KHGNRGVSS), and S124. G84 contacts anthranilate. S96 contributes to the Mg(2+) binding site. N115 contributes to the anthranilate binding site. Anthranilate is bound at residue R170. Mg(2+) contacts are provided by D229 and E230.

The protein belongs to the anthranilate phosphoribosyltransferase family. Homodimer. Mg(2+) is required as a cofactor.

It catalyses the reaction N-(5-phospho-beta-D-ribosyl)anthranilate + diphosphate = 5-phospho-alpha-D-ribose 1-diphosphate + anthranilate. Its pathway is amino-acid biosynthesis; L-tryptophan biosynthesis; L-tryptophan from chorismate: step 2/5. Catalyzes the transfer of the phosphoribosyl group of 5-phosphorylribose-1-pyrophosphate (PRPP) to anthranilate to yield N-(5'-phosphoribosyl)-anthranilate (PRA). This Burkholderia orbicola (strain MC0-3) protein is Anthranilate phosphoribosyltransferase.